The primary structure comprises 471 residues: UDP-N-acetylmuramoylalanine--D-glutamate ligase (471 aa).

ATP is bound at residue 123 to 129 (GTNGKST).

It belongs to the MurCDEF family.

Its subcellular location is the cytoplasm. The catalysed reaction is UDP-N-acetyl-alpha-D-muramoyl-L-alanine + D-glutamate + ATP = UDP-N-acetyl-alpha-D-muramoyl-L-alanyl-D-glutamate + ADP + phosphate + H(+). The protein operates within cell wall biogenesis; peptidoglycan biosynthesis. In terms of biological role, cell wall formation. Catalyzes the addition of glutamate to the nucleotide precursor UDP-N-acetylmuramoyl-L-alanine (UMA). The sequence is that of UDP-N-acetylmuramoylalanine--D-glutamate ligase from Caulobacter vibrioides (strain ATCC 19089 / CIP 103742 / CB 15) (Caulobacter crescentus).